The sequence spans 316 residues: Large ribosomal subunit protein uL10 (316 aa).

The tract at residues 289 to 316 (AAAAAPAKEAPKEESEESDEDMGFGLFD) is disordered.

It belongs to the universal ribosomal protein uL10 family. In terms of assembly, P0 forms a pentameric complex by interaction with dimers of P1 and P2. Post-translationally, phosphorylated.

It localises to the nucleus. The protein resides in the cytoplasm. Functionally, ribosomal protein P0 is the functional equivalent of E.coli protein L10. The chain is Large ribosomal subunit protein uL10 (RPLP0) from Gallus gallus (Chicken).